The following is a 539-amino-acid chain: Cytochrome P450 monooxygenase pvhE (539 aa).

Residues 15 to 31 (VAFCSLVILCILFKVLT) traverse the membrane as a helical segment. A glycan (N-linked (GlcNAc...) asparagine) is linked at N379. C473 contributes to the heme binding site.

It belongs to the cytochrome P450 family. It depends on heme as a cofactor.

It is found in the membrane. It participates in secondary metabolite biosynthesis. Its function is as follows. Cytochrome P450 monooxygenase; part of the gene cluster that mediates the biosynthesis of varicidin A, an antifungal natural product containing a cis-octahydrodecalin core. The PKS module of pvhA together with the enoylreductase pvhC catalyze the formation of the polyketide unit which is then conjugated to L-isoleucine by the condensation domain of the NRPS module. Activity of the Dieckmann cyclase domain (RED) of pvhA results in release of an acyclic tetramate. The cytochrome P450 monooxygenase pvhE then catalyzes the oxidation of the C21 methyl group to a to carboxylate group. The methyltransferase pvhD then further methylates the pvhE product. The Diels-Alderase pvhB is able to catalyze Diels-Alder cycloaddition using both pvhE and pvhD products as substrates to form the decalin ring, yielding varicidin B and A, respectively. The chain is Cytochrome P450 monooxygenase pvhE from Talaromyces variabilis (Penicillium variabile).